A 192-amino-acid polypeptide reads, in one-letter code: Iodate reductase subunit IdrB (192 aa).

The segment at residues 1–52 (MSENIIPVRAVPAHDHEHDGERACMSRRRFLLFGGTSVALLSIASLPGVAQV) is a signal peptide (tat-type signal). Positions 102 to 173 (GADKDIVAFN…LEVQGDDIYA (72 aa)) constitute a Rieske domain. Positions 114, 116, 135, and 138 each coordinate [2Fe-2S] cluster.

It belongs to the AOX family. As to quaternary structure, the iodate reductase (Idr) complex is composed of a molybdopterin-dependent iodate reductase (IdrA and IdrB subunits) and two associated peroxidases (IdrP1 and IdrP2). Requires [2Fe-2S] cluster as cofactor. In terms of processing, predicted to be exported by the Tat system. The position of the signal peptide cleavage has not been experimentally proven.

It is found in the periplasm. Its function is as follows. Involved in iodate respiration. Probably catalyzes the reduction of iodate (IO(3)(-)) to hypoiodous acid (HIO) and H(2)O(2), using a reduced cytochrome c as the electron donor. This chain is Iodate reductase subunit IdrB, found in Pseudomonas sp. (strain SCT).